We begin with the raw amino-acid sequence, 450 residues long: Casein kinase 1-like protein 1 (450 aa).

Residues F9–I278 form the Protein kinase domain. ATP contacts are provided by residues I15–I23 and K38. The active-site Proton acceptor is the D128. The segment at A311–H450 is disordered. Positions Y328–R342 are enriched in basic and acidic residues. Residues L349–R365 show a composition bias toward polar residues. Low complexity predominate over residues S371–S382.

The protein belongs to the protein kinase superfamily. CK1 Ser/Thr protein kinase family. Casein kinase I subfamily. In terms of assembly, monomer. Post-translationally, autophosphorylated. In terms of tissue distribution, expressed in flowers.

The protein resides in the cytoplasm. Its subcellular location is the cell junction. The protein localises to the plasmodesma. It catalyses the reaction L-seryl-[protein] + ATP = O-phospho-L-seryl-[protein] + ADP + H(+). It carries out the reaction L-threonyl-[protein] + ATP = O-phospho-L-threonyl-[protein] + ADP + H(+). Casein kinases are operationally defined by their preferential utilization of acidic proteins such as caseins as substrates. It can phosphorylate a large number of proteins. In Arabidopsis thaliana (Mouse-ear cress), this protein is Casein kinase 1-like protein 1.